The chain runs to 63 residues: Protein virE1 (63 aa).

In terms of assembly, forms heterodimers with virE2 that prevent virE2 anarchic homopolymerization and binding to DNA.

In terms of biological role, involved in DNA transformation; controls virE2 polymerization and prevents virE2 binding to DNA. The protein is Protein virE1 (virE1) of Agrobacterium fabrum (strain C58 / ATCC 33970) (Agrobacterium tumefaciens (strain C58)).